Here is a 150-residue protein sequence, read N- to C-terminus: SsrA-binding protein (150 aa).

A disordered region spans residues 127–150 (KRETEKQRDWQREKARIMKGDAKD).

Belongs to the SmpB family.

The protein localises to the cytoplasm. Required for rescue of stalled ribosomes mediated by trans-translation. Binds to transfer-messenger RNA (tmRNA), required for stable association of tmRNA with ribosomes. tmRNA and SmpB together mimic tRNA shape, replacing the anticodon stem-loop with SmpB. tmRNA is encoded by the ssrA gene; the 2 termini fold to resemble tRNA(Ala) and it encodes a 'tag peptide', a short internal open reading frame. During trans-translation Ala-aminoacylated tmRNA acts like a tRNA, entering the A-site of stalled ribosomes, displacing the stalled mRNA. The ribosome then switches to translate the ORF on the tmRNA; the nascent peptide is terminated with the 'tag peptide' encoded by the tmRNA and targeted for degradation. The ribosome is freed to recommence translation, which seems to be the essential function of trans-translation. This Cupriavidus necator (strain ATCC 17699 / DSM 428 / KCTC 22496 / NCIMB 10442 / H16 / Stanier 337) (Ralstonia eutropha) protein is SsrA-binding protein.